Here is a 203-residue protein sequence, read N- to C-terminus: Superoxide dismutase [Mn] (203 aa).

4 residues coordinate Mn(2+): histidine 27, histidine 81, aspartate 167, and histidine 171.

Belongs to the iron/manganese superoxide dismutase family. In terms of assembly, homodimer. Requires Mn(2+) as cofactor.

It catalyses the reaction 2 superoxide + 2 H(+) = H2O2 + O2. In terms of biological role, destroys superoxide anion radicals which are normally produced within the cells and which are toxic to biological systems. This Buchnera aphidicola subsp. Acyrthosiphon pisum (strain APS) (Acyrthosiphon pisum symbiotic bacterium) protein is Superoxide dismutase [Mn] (sodA).